A 263-amino-acid polypeptide reads, in one-letter code: MSDILNISCYKFTPLPDAAALRDTLAERAQALALKGTILLAEEGINFFLAGPAQAVHSFVDQLRADDRFADLAPKESWSDTVPFRKMLVKVKREIIRMDHPTIRPAEGRAPSVSPATLRRWLEQGHDDEGREVVTLDTRNDFEVDAGAFKDTIDWRITKFTEFPPALRAHKAELADKTVVSYCTGGIRCEKAAILMRDEGLEHVYQLEGGILKYFEETDGAFYDGGCFVFDERRAVGADLAITPLAPAEPLEPIQPTSPPGKA.

Positions 129-223 (EGREVVTLDT…YFEETDGAFY (95 aa)) constitute a Rhodanese domain. The active-site Cysteine persulfide intermediate is the C183.

The protein belongs to the TrhO family.

It catalyses the reaction uridine(34) in tRNA + AH2 + O2 = 5-hydroxyuridine(34) in tRNA + A + H2O. Functionally, catalyzes oxygen-dependent 5-hydroxyuridine (ho5U) modification at position 34 in tRNAs. This chain is tRNA uridine(34) hydroxylase, found in Delftia acidovorans (strain DSM 14801 / SPH-1).